A 98-amino-acid chain; its full sequence is Large ribosomal subunit protein uL23 (98 aa).

Belongs to the universal ribosomal protein uL23 family. Part of the 50S ribosomal subunit. Contacts protein L29, and trigger factor when it is bound to the ribosome.

Its function is as follows. One of the early assembly proteins it binds 23S rRNA. One of the proteins that surrounds the polypeptide exit tunnel on the outside of the ribosome. Forms the main docking site for trigger factor binding to the ribosome. This Bifidobacterium longum (strain DJO10A) protein is Large ribosomal subunit protein uL23.